A 550-amino-acid polypeptide reads, in one-letter code: Tyrosine-protein phosphatase 1 (550 aa).

The Tyrosine-protein phosphatase domain maps to 260–539 (LYQKFLRLQS…KYVYDLIDSL (280 aa)). Phosphoserine occurs at positions 318 and 320. Cysteine 470 functions as the Phosphocysteine intermediate in the catalytic mechanism.

Belongs to the protein-tyrosine phosphatase family. Non-receptor class subfamily.

The protein resides in the cytoplasm. The catalysed reaction is O-phospho-L-tyrosyl-[protein] + H2O = L-tyrosyl-[protein] + phosphate. Plays a role in inhibiting the onset of mitosis. Dephosphorylates sty1/spc1 and wis1/spc2/sty2. The polypeptide is Tyrosine-protein phosphatase 1 (pyp1) (Schizosaccharomyces pombe (strain 972 / ATCC 24843) (Fission yeast)).